Consider the following 69-residue polypeptide: Pancreatic secretory trypsin inhibitor (69 aa).

One can recognise a Kazal-like domain in the interval 8-65; sequence TGTEAACSNYDLKKGCAKIFDPVCGTDNILYSNECLLCFQNLQRKTNVRIKRRGTCQE. Cystine bridges form between Cys14/Cys45, Cys23/Cys42, and Cys31/Cys63.

Its subcellular location is the secreted. Its function is as follows. This is a trypsin inhibitor, its physiological function is to prevent the trypsin-catalyzed premature activation of zymogens within the pancreas. This chain is Pancreatic secretory trypsin inhibitor (SPINK1), found in Struthio camelus (Common ostrich).